A 320-amino-acid chain; its full sequence is Ribose-phosphate pyrophosphokinase 1 (320 aa).

ATP-binding positions include 39-41 and 98-99; these read DGE and RQ. Mg(2+) contacts are provided by His-132 and Asp-173. The active site involves Lys-196. Residues Arg-198, Asp-224, and 228–232 contribute to the D-ribose 5-phosphate site; that span reads DTAGT.

This sequence belongs to the ribose-phosphate pyrophosphokinase family. Class I subfamily. As to quaternary structure, homohexamer. Mg(2+) serves as cofactor.

It is found in the cytoplasm. It catalyses the reaction D-ribose 5-phosphate + ATP = 5-phospho-alpha-D-ribose 1-diphosphate + AMP + H(+). The protein operates within metabolic intermediate biosynthesis; 5-phospho-alpha-D-ribose 1-diphosphate biosynthesis; 5-phospho-alpha-D-ribose 1-diphosphate from D-ribose 5-phosphate (route I): step 1/1. Its function is as follows. Involved in the biosynthesis of the central metabolite phospho-alpha-D-ribosyl-1-pyrophosphate (PRPP) via the transfer of pyrophosphoryl group from ATP to 1-hydroxyl of ribose-5-phosphate (Rib-5-P). The sequence is that of Ribose-phosphate pyrophosphokinase 1 from Streptococcus pyogenes serotype M1.